A 213-amino-acid chain; its full sequence is MRTIDKRIAPNVRLAATLVARAPALTLAYDARCKSRLAATLDTGEDVALVLPRGTVLRDGDVLVADDGALVRVAAAHEAVLLVRAPDALTLTRAAYHLGNRHTPVEVGAGCLKLEYDPALADMLTRLGATVERASAPFQPEAGAYGGGHRHGHDATFAEDYALAQQVFDEHHGHSHSHSHSHSHDHDHDHDHDHDHDHQHGPSCSHGHHHGHR.

The tract at residues 170–213 (EHHGHSHSHSHSHSHDHDHDHDHDHDHDHQHGPSCSHGHHHGHR) is disordered. Residues 182–200 (HSHDHDHDHDHDHDHDHQH) show a composition bias toward basic and acidic residues.

The protein belongs to the UreE family.

It localises to the cytoplasm. In terms of biological role, involved in urease metallocenter assembly. Binds nickel. Probably functions as a nickel donor during metallocenter assembly. This chain is Urease accessory protein UreE, found in Burkholderia mallei (strain NCTC 10229).